Reading from the N-terminus, the 503-residue chain is Ferulic acid decarboxylase 1 (503 aa).

Residues asparagine 170, histidine 193, and glutamate 236 each coordinate Mn(2+). Prenylated FMN is bound by residues 170–175, 192–193, and glutamate 236; these read NWSIAR and QH. Residue glutamate 285 is the Proton donor of the active site. Residue lysine 394 coordinates prenylated FMN.

This sequence belongs to the UbiD family. UbiD-like/FDC subfamily. In terms of assembly, homodimer. May form higher order oligomers. It depends on Mn(2+) as a cofactor. Prenylated FMN serves as cofactor.

The protein resides in the cytoplasm. The enzyme catalyses (E)-4-coumarate + H(+) = 4-vinylphenol + CO2. The catalysed reaction is (E)-cinnamate + H(+) = styrene + CO2. It carries out the reaction (E)-ferulate + H(+) = 2-methoxy-4-vinylphenol + CO2. In terms of biological role, catalyzes the reversible decarboxylation of aromatic carboxylic acids like ferulic acid, p-coumaric acid or cinnamic acid, producing the corresponding vinyl derivatives 4-vinylphenol, 4-vinylguaiacol, and styrene, respectively, which play the role of aroma metabolites. Not essential for ubiquinone synthesis. This is Ferulic acid decarboxylase 1 from Saccharomyces cerevisiae (strain ATCC 204508 / S288c) (Baker's yeast).